The sequence spans 208 residues: Heavy metal-associated isoprenylated plant protein 42 (208 aa).

An HMA domain is found at Phe6–Gln70. Positions Ala93–Thr116 are disordered. Cys205 carries the post-translational modification Cysteine methyl ester. Cys205 carries S-farnesyl cysteine lipidation. Residues Ser206–Met208 constitute a propeptide, removed in mature form.

This sequence belongs to the HIPP family.

In terms of biological role, probable heavy-metal-binding protein. In Arabidopsis thaliana (Mouse-ear cress), this protein is Heavy metal-associated isoprenylated plant protein 42.